A 308-amino-acid chain; its full sequence is General transcription factor IIH subunit 3 (308 aa).

The segment at 268–285 (CSVCLSIFCNFSPICTTC) adopts a C4-type zinc-finger fold.

The protein belongs to the TFB4 family. Part of a TFIID-containing RNA polymerase II pre-initiation complex that is composed of TBP and at least GTF2A1, GTF2A2, GTF2E1, GTF2E2, GTF2F1, GTF2H2, GTF2H3, GTF2H4, GTF2H5, GTF2B, TCEA1, ERCC2, ERCC3, TAF1, TAF2, TAF3, TAF4, TAF5, TAF6, TAF7, TAF8, TAF9, TAF10, TAF11, TAF12 and TAF13. Component of the 7-subunit TFIIH core complex composed of XPB/ERCC3, XPD/ERCC2, GTF2H1, GTF2H2, GTF2H3, GTF2H4 and GTF2H5, which is active in NER. The core complex associates with the 3-subunit CDK-activating kinase (CAK) module composed of CCNH/cyclin H, CDK7 and MNAT1 to form the 10-subunit holoenzyme (holo-TFIIH) active in transcription. Interacts with RARA; the interaction requires prior phosphorylation of RARA on 'Ser-369' which then enhances interaction of RARA with CDK7.

The protein localises to the nucleus. Functionally, component of the general transcription and DNA repair factor IIH (TFIIH) core complex, which is involved in general and transcription-coupled nucleotide excision repair (NER) of damaged DNA and, when complexed to CAK, in RNA transcription by RNA polymerase II. In NER, TFIIH acts by opening DNA around the lesion to allow the excision of the damaged oligonucleotide and its replacement by a new DNA fragment. In transcription, TFIIH has an essential role in transcription initiation. When the pre-initiation complex (PIC) has been established, TFIIH is required for promoter opening and promoter escape. Phosphorylation of the C-terminal tail (CTD) of the largest subunit of RNA polymerase II by the kinase module CAK controls the initiation of transcription. The protein is General transcription factor IIH subunit 3 (GTF2H3) of Homo sapiens (Human).